The chain runs to 263 residues: ABC transporter I family member 17 (263 aa).

The 232-residue stretch at 29-260 (IRVHDLTRVA…THPMAQRFLQ (232 aa)) folds into the ABC transporter domain. Residue 62–69 (GPSGSGKS) coordinates ATP.

Belongs to the ABC transporter superfamily. ABCI family.

This chain is ABC transporter I family member 17 (ABCI17), found in Arabidopsis thaliana (Mouse-ear cress).